The chain runs to 475 residues: Dihydrolipoyl dehydrogenase (475 aa).

Residues 36–45, K54, and G117 contribute to the FAD site; that span reads ERYNTLGGVC. The cysteines at positions 45 and 50 are disulfide-linked. NAD(+) contacts are provided by residues 182–186, E205, V238, and 270–273; these read GGGII and AIGR. Residues D313 and A321 each coordinate FAD. Residue H445 is the Proton acceptor of the active site.

This sequence belongs to the class-I pyridine nucleotide-disulfide oxidoreductase family. FAD serves as cofactor.

Its subcellular location is the cytoplasm. The catalysed reaction is N(6)-[(R)-dihydrolipoyl]-L-lysyl-[protein] + NAD(+) = N(6)-[(R)-lipoyl]-L-lysyl-[protein] + NADH + H(+). Functionally, the branched-chain alpha-keto dehydrogenase complex catalyzes the overall conversion of alpha-keto acids to acyl-CoA and CO(2). It contains multiple copies of 3 enzymatic components: branched-chain alpha-keto acid decarboxylase (E1), lipoamide acyltransferase (E2) and lipoamide dehydrogenase (E3). In Vibrio cholerae serotype O1 (strain ATCC 39315 / El Tor Inaba N16961), this protein is Dihydrolipoyl dehydrogenase (lpd).